Consider the following 3014-residue polypeptide: Cadherin EGF LAG seven-pass G-type receptor 1 (3014 aa).

The N-terminal stretch at 1-20 is a signal peptide; that stretch reads MAPPPPPVLPVLLLLAAAAA. Residues 22–2469 are Extracellular-facing; that stretch reads PAMGLRAAAW…RENGEVLPLK (2448 aa). Residues 205 to 242 are disordered; it reads AGTPSASPSPSPPLPPNLPEARAGPARRARRGTSGRGS. Over residues 211–222 the composition is skewed to pro residues; the sequence is SPSPSPPLPPNL. Cadherin domains follow at residues 246-353, 354-459, 460-565, 566-687, 688-789, 790-892, 893-999, 1000-1101, and 1106-1224; these read PMPN…SPVF, EQSE…YPQF, SEQN…EPIF, VSSP…DPVF, TQPT…RPVF, QSSH…APQF, LWDF…APMF, EKDE…PPVL, and ILFN…SPLL. 4 N-linked (GlcNAc...) asparagine glycosylation sites follow: asparagine 403, asparagine 546, asparagine 634, and asparagine 778. N-linked (GlcNAc...) asparagine glycans are attached at residues asparagine 1114, asparagine 1139, asparagine 1213, asparagine 1249, asparagine 1259, and asparagine 1287. Positions 1303–1361 constitute an EGF-like 1; calcium-binding domain; that stretch reads DDNICLREPCENYMKCVSVLRFDSSAPFLSSTTVLFRPIHPINGLRCRCPPGFTGDYCE. Intrachain disulfides connect cysteine 1307–cysteine 1318, cysteine 1312–cysteine 1349, cysteine 1351–cysteine 1360, cysteine 1367–cysteine 1378, cysteine 1372–cysteine 1387, cysteine 1389–cysteine 1398, cysteine 1407–cysteine 1418, cysteine 1412–cysteine 1428, and cysteine 1430–cysteine 1440. Positions 1363-1399 constitute an EGF-like 2; calcium-binding domain; it reads EIDLCYSDPCGANGRCRSREGGYTCECFEDFTGEHCE. Residues 1403 to 1441 enclose the EGF-like 3; calcium-binding domain; that stretch reads RSGRCANGVCKNGGTCVNLLIGGFHCVCPPGEYERPYCE. The 205-residue stretch at 1442–1646 folds into the Laminin G-like 1 domain; it reads VTTRSFPPQS…IANNGTREGC (205 aa). Residues asparagine 1576, asparagine 1623, and asparagine 1640 are each glycosylated (N-linked (GlcNAc...) asparagine). 13 cysteine pairs are disulfide-bonded: cysteine 1620-cysteine 1646, cysteine 1653-cysteine 1664, cysteine 1658-cysteine 1673, cysteine 1675-cysteine 1684, cysteine 1840-cysteine 1870, cysteine 1876-cysteine 1887, cysteine 1881-cysteine 1896, cysteine 1898-cysteine 1907, cysteine 1911-cysteine 1922, cysteine 1916-cysteine 1934, cysteine 1936-cysteine 1945, cysteine 1953-cysteine 1966, and cysteine 1968-cysteine 1978. The 37-residue stretch at 1649–1685 folds into the EGF-like 4; calcium-binding domain; that stretch reads RRNFCDGRRCQNGGTCVNRWNMYLCECPLRFGGKNCE. (3R)-3-hydroxyasparagine is present on asparagine 1666. A Laminin G-like 2 domain is found at 1689–1870; that stretch reads PHPQLFSGES…ALKVRVKDGC (182 aa). In terms of domain architecture, EGF-like 5; calcium-binding spans 1872–1907; it reads VDDPCTSSPCPPNSRCHDAWEDYSCVCDKGYLGINC. A (3R)-3-hydroxyaspartate modification is found at aspartate 1889. In terms of domain architecture, EGF-like 6; calcium-binding spans 1908-1946; sequence VDACHLNPCENMGACVRSPGSPQGYVCECGPSHYGPYCE. Positions 1947 to 1979 constitute an EGF-like 7; calcium-binding domain; the sequence is NKLDLPCPRGWWGNPVCGPCHCAVSKGFDPDCN. Asparagine 1979 is a glycosylation site (N-linked (GlcNAc...) asparagine). Residues 1981-2016 enclose the EGF-like 8; calcium-binding domain; the sequence is TNGQCQCKENYYKLLAQDTCLPCDCFPHGSHSRTCD. Cystine bridges form between cysteine 1985/cysteine 2000, cysteine 1987/cysteine 2003, cysteine 2005/cysteine 2015, cysteine 2024/cysteine 2033, and cysteine 2036/cysteine 2048. Positions 2003 to 2050 constitute a Laminin EGF-like domain; sequence CDCFPHGSHSRTCDMATGQCACKPGVIGRQCNRCDNPFAEVTTLGCEV. 3 N-linked (GlcNAc...) asparagine glycosylation sites follow: asparagine 2103, asparagine 2122, and asparagine 2257. A disordered region spans residues 2291-2328; sequence PEEKEGPLLRPAGRRTTPQTTRPGPGTEREAPISRRRR. The GAIN-B domain maps to 2297-2461; sequence PLLRPAGRRT…AVLMDISRRE (165 aa). Residues 2300–2316 are compositionally biased toward low complexity; it reads RPAGRRTTPQTTRPGPG. 2 disulfide bridges follow: cysteine 2411–cysteine 2443 and cysteine 2431–cysteine 2445. Residues 2411–2461 form a GPS region; sequence CVFWNHSLAVGGTGGWSARGCELLSRNRTHVACQCSHTASFAVLMDISRRE. Asparagine 2415 and asparagine 2437 each carry an N-linked (GlcNAc...) asparagine glycan. A helical transmembrane segment spans residues 2470-2490; that stretch reads IVTYAAVSLSLAALLVAFVLL. Topologically, residues 2491–2501 are cytoplasmic; that stretch reads SLVRMLRSNLH. Residues 2502-2522 form a helical membrane-spanning segment; sequence SIHKHLAVALFLSQLVFVIGI. Asparagine 2523 is a glycosylation site (N-linked (GlcNAc...) asparagine). Residues 2523-2527 lie on the Extracellular side of the membrane; it reads NQTEN. The helical transmembrane segment at 2528–2548 threads the bilayer; that stretch reads PFLCTVVAILLHYIYMSTFAW. The Cytoplasmic portion of the chain corresponds to 2549 to 2572; the sequence is TLVESLHVYRMLTEVRNIDTGPMR. The chain crosses the membrane as a helical span at residues 2573-2593; that stretch reads FYYVVGWGIPAIVTGLAVGLD. Topologically, residues 2594-2611 are extracellular; the sequence is PQGYGNPDFCWLSLQDTL. A helical transmembrane segment spans residues 2612–2632; that stretch reads IWSFAGPIGAVIIINTVTSVL. The Cytoplasmic portion of the chain corresponds to 2633 to 2655; it reads SAKVSCQRKHHYYGKKGIVSLLR. Residues 2656-2676 traverse the membrane as a helical segment; it reads TAFLLLLLISATWLLGLLAVN. Topologically, residues 2677 to 2683 are extracellular; sequence RDALSFH. The chain crosses the membrane as a helical span at residues 2684 to 2704; the sequence is YLFAIFSGLQGPFVLLFHCVL. The Cytoplasmic portion of the chain corresponds to 2705–3014; it reads NQEVRKHLKG…QADGSDSEKP (310 aa). Serine 2761 and serine 2764 each carry phosphoserine. Disordered stretches follow at residues 2777-2939 and 2954-3014; these read SSGL…PPPL and LADC…SEKP. The segment covering 2796-2806 has biased composition (basic and acidic residues); it reads SCKDPPGHDSD. Residues 2814-2825 are compositionally biased toward low complexity; that stretch reads DEQSSSYASSHS. Phosphoserine occurs at positions 2871 and 2873. The span at 2876 to 2904 shows a compositional bias: basic and acidic residues; the sequence is PSGKPRLKVETKVSVELHREEQGSHRGEY. Low complexity predominate over residues 2960-2969; sequence SPTSSRTSSL. Basic and acidic residues predominate over residues 2983–2992; that stretch reads PGREPGRDHL.

It belongs to the G-protein coupled receptor 2 family. LN-TM7 subfamily. Post-translationally, the iron and 2-oxoglutarate dependent 3-hydroxylation of aspartate and asparagine is (R) stereospecific within EGF domains.

It is found in the cell membrane. Functionally, receptor that may have an important role in cell/cell signaling during nervous system formation. This Homo sapiens (Human) protein is Cadherin EGF LAG seven-pass G-type receptor 1 (CELSR1).